The primary structure comprises 93 residues: Small ribosomal subunit protein uS19 (93 aa).

The protein belongs to the universal ribosomal protein uS19 family.

In terms of biological role, protein S19 forms a complex with S13 that binds strongly to the 16S ribosomal RNA. This is Small ribosomal subunit protein uS19 (rpsS) from Thermus thermophilus (strain ATCC BAA-163 / DSM 7039 / HB27).